The chain runs to 401 residues: UPF0242 protein CPn_0755/CP_1117/CPj0755/CpB0783 (401 aa).

This sequence belongs to the UPF0242 family.

The polypeptide is UPF0242 protein CPn_0755/CP_1117/CPj0755/CpB0783 (Chlamydia pneumoniae (Chlamydophila pneumoniae)).